The primary structure comprises 296 residues: Malate--CoA ligase subunit alpha (296 aa).

CoA is bound by residues 17 to 20, K43, and 96 to 98; these read TGDK and ITD. The active-site Tele-phosphohistidine intermediate is H251.

This sequence belongs to the succinate/malate CoA ligase alpha subunit family. As to quaternary structure, heterotetramer of two alpha and two beta subunits.

It carries out the reaction (S)-malate + ATP + CoA = (S)-malyl-CoA + ADP + phosphate. It participates in one-carbon metabolism; formaldehyde assimilation via serine pathway. The sequence is that of Malate--CoA ligase subunit alpha (mtkB) from Methylorubrum extorquens (strain ATCC 14718 / DSM 1338 / JCM 2805 / NCIMB 9133 / AM1) (Methylobacterium extorquens).